Reading from the N-terminus, the 1166-residue chain is Reverse gyrase 2 (1166 aa).

Residues 1–40 form an RG N-terminal-type zinc finger; the sequence is MINVMYKNSCPNCGGDISGDRLLNGLPCEACLPYINGIDD. 4 residues coordinate Zn(2+): C10, C13, C28, and C31. ATP contacts are provided by residues Q92 and 109–116; that span reads APTGLGKT. Positions 96–285 constitute a Helicase ATP-binding domain; the sequence is LRRLASNQSF…ALRLLTGFEP (190 aa). The DEAD box signature appears at 190-193; the sequence is DDAD. The tract at residues 576 to 1166 is topoisomerase I; sequence FNISTGLLIV…VNPLKSEQNV (591 aa). The Toprim domain occupies 580 to 743; it reads TGLLIVESPT…NVYRVVYHEI (164 aa). E586 is a Mg(2+) binding site. The RG C-terminal-type zinc finger occupies 662–689; the sequence is IKKCLDCNKIFSSASDKCPYCGSANLQS. Residues C665, C668, C679, and C682 each contribute to the Zn(2+) site. Position 712 (D712) interacts with Mg(2+). The 399-residue stretch at 759 to 1157 folds into the Topo IA-type catalytic domain; the sequence is NTNLVMSQIV…EIFSEISTLV (399 aa). The active-site O-(5'-phospho-DNA)-tyrosine intermediate is Y903.

This sequence in the N-terminal section; belongs to the DEAD box helicase family. DDVD subfamily. The protein in the C-terminal section; belongs to the type IA topoisomerase family. As to quaternary structure, monomer. The cofactor is Zn(2+). Requires Mg(2+) as cofactor.

The protein resides in the cytoplasm. It carries out the reaction ATP + H2O = ADP + phosphate + H(+). Its activity is regulated as follows. At least one of the 2 proteins is inhibited by actinomycin D. Less sensitive to NaCl than TopR1, maximal positive supercoiling is observed with 100 mM NaCl; as NaCl rises higher than 400 mM supercoiling decreases. At 600 mM NaCl relaxes but does not introduce positive supercoils into negatively supercoiled substrate. Modifies the topological state of DNA by introducing positive supercoils in an ATP-dependent process. A highly processive enzyme, it introduces a large number of positive supercoils directly in a negatively supercoiled substrate. At 75 degrees Celsius introduces more than 23 positive supercoils into pTZ18R DNA (probably 2860 bp), more than TopR1; unlike TopR1 little to no relaxation of the negatively supercoiled substrate is seen in the presence of ATP, in the absence of ATP no activity is seen. At 45 degrees Celsius the enzyme is slower and in vitro individual steps can be detected. It cleaves transiently a single DNA strand and remains covalently bound to the 5' DNA end through a tyrosine residue. May be involved in DNA damage response. May be involved in rewinding the DNA strands in the regions of the chromosome that have opened up to allow transcription or replication. Functionally, there are 2 genes for this protein in the cell. During exponential growth this is the more highly expressed isoform (about 125 molecules per cell at 80 degrees Celsius, about 117 molecules at 88 degrees Celsius); this isoform is less active at higher temperature. Grows actively at both 80 and 88 degrees Celsius; survives a long exposure at 45 degrees Celsius without DNA replication or cell division occurring. Experiments using whole cell extracts do not distinguish which isoform is present, the results are probably a mixture of the two forms. The chain is Reverse gyrase 2 from Saccharolobus solfataricus (strain ATCC 35092 / DSM 1617 / JCM 11322 / P2) (Sulfolobus solfataricus).